Consider the following 668-residue polypeptide: Protein IQ-DOMAIN 14 (668 aa).

The segment at 1-11 (MVKKGSWFSAI) is calmodulin-binding. 2 disordered regions span residues 16–54 (TPHSKEKLANEPERKSGKEKKKKGFGKLRHGETNSFLPI) and 66–305 (GEAE…PRAV). The segment covering 18 to 31 (HSKEKLANEPERKS) has biased composition (basic and acidic residues). Over residues 32-43 (GKEKKKKGFGKL) the composition is skewed to basic residues. The segment covering 78-96 (PPTPDRPNPYSASPPPRPA) has biased composition (pro residues). Composition is skewed to low complexity over residues 97 to 120 (SPRVASPRPTSPRVASPRVPSPRA) and 166 to 175 (PSSASANAPP). Residues 269–279 (PTTPKPPSPRS) show a composition bias toward pro residues. 2 consecutive IQ domains span residues 321-350 (QHASATKIQGAFRGYMARKSFRALKGLVRL) and 343-372 (ALKGLVRLQGVVRGYSVKRQTINAMKYMQQ). 2 disordered regions span residues 399-431 (AKWAASEAGNDNWDDSVLTKEERDSRSQRKTDA) and 476-561 (SPAP…SLTS). Residues 415 to 431 (VLTKEERDSRSQRKTDA) show a composition bias toward basic and acidic residues. Over residues 516 to 529 (DTSTPRSSRSTFHT) the composition is skewed to polar residues.

The protein belongs to the IQD family. In terms of assembly, binds to multiple calmodulin (CaM) in the presence of Ca(2+) and CaM-like proteins. As to expression, expressed in hypocotyls, cotyledons, leaves and petioles.

It localises to the cell membrane. It is found in the cytoplasm. Its subcellular location is the cytoskeleton. May be involved in cooperative interactions with calmodulins or calmodulin-like proteins. Recruits calmodulin proteins to microtubules, thus being a potential scaffold in cellular signaling and trafficking. Regulates cell and organ shapes (prevents twisting) in aerial parts probably by regulating transverse microtubules (MT) arrays alignment. Regulates the formation of oval xylem secondary cell-wall deposition pits through microtubule-dependent lateral inhibition of Rho GTPase domains, thus confining the area of active ROP domains within the lattice of the cortical microtubules. May associate with nucleic acids and regulate gene expression at the transcriptional or post-transcriptional level. This Arabidopsis thaliana (Mouse-ear cress) protein is Protein IQ-DOMAIN 14.